The primary structure comprises 307 residues: 1-aminocyclopropane-1-carboxylate oxidase 5 (307 aa).

The stretch at serine 106 to leucine 134 forms a coiled coil. One can recognise a Fe2OG dioxygenase domain in the interval glycine 152 to proline 256. Fe cation-binding residues include histidine 180, aspartate 182, and histidine 237. Arginine 247 contacts 2-oxoglutarate.

This sequence belongs to the iron/ascorbate-dependent oxidoreductase family. Fe(2+) serves as cofactor.

It carries out the reaction 1-aminocyclopropane-1-carboxylate + L-ascorbate + O2 = ethene + L-dehydroascorbate + hydrogen cyanide + CO2 + 2 H2O. It participates in alkene biosynthesis; ethylene biosynthesis via S-adenosyl-L-methionine; ethylene from S-adenosyl-L-methionine: step 2/2. In terms of biological role, enzyme involved in the ethylene biosynthesis. The chain is 1-aminocyclopropane-1-carboxylate oxidase 5 from Arabidopsis thaliana (Mouse-ear cress).